We begin with the raw amino-acid sequence, 862 residues long: Kinesin-like protein KIN-7J (862 aa).

Positions 9 to 331 (RIVVSVRLRP…LLFANCAKDV (323 aa)) constitute a Kinesin motor domain. ATP is bound at residue 95–102 (GQTSSGKT). A coiled-coil region spans residues 340–415 (VMSDKALVKH…NFRKVASDGD (76 aa)). Composition is skewed to basic and acidic residues over residues 475 to 499 (EEHEAQRVAHRAESEPPEEHCKEVQ) and 518 to 531 (PEKKTHTDDQKHSE). Disordered stretches follow at residues 475–532 (EEHE…HSES) and 596–643 (DDSA…STCN). Over residues 598–610 (SASTTPSSETFRY) the composition is skewed to polar residues. A compositionally biased stretch (basic and acidic residues) spans 613–629 (RRPEKVRKSLSPDEIAD).

It belongs to the TRAFAC class myosin-kinesin ATPase superfamily. Kinesin family. KIN-7 subfamily.

In Oryza sativa subsp. japonica (Rice), this protein is Kinesin-like protein KIN-7J.